A 648-amino-acid polypeptide reads, in one-letter code: Serine/threonine-protein phosphatase 1 regulatory subunit PIG1 (648 aa).

Residues 20 to 51 (STSSFVSSTTSNSFSPLEDSTSASSSTSSSSS) are compositionally biased toward low complexity. The segment at 20 to 52 (STSSFVSSTTSNSFSPLEDSTSASSSTSSSSSG) is disordered. The 131-residue stretch at 201-331 (HSLELSDPVS…NNDYKNYEIT (131 aa)) folds into the CBM21 domain. Over residues 593–609 (RESSSPEISPLNTTTSL) the composition is skewed to polar residues. The segment at 593-629 (RESSSPEISPLNTTTSLPFFPGDNMSDSSGEYEERTS) is disordered.

In terms of biological role, regulates the activity of glycogen synthase. It is most probably a regulatory subunit for protein phosphatase type 1. The chain is Serine/threonine-protein phosphatase 1 regulatory subunit PIG1 (PIG1) from Saccharomyces cerevisiae (strain ATCC 204508 / S288c) (Baker's yeast).